The primary structure comprises 371 residues: Queuine tRNA-ribosyltransferase (371 aa).

The Proton acceptor role is filled by Asp93. Substrate contacts are provided by residues 93–97 (DSGGF), Asp147, Gln191, and Gly218. Residues 249-255 (GVGTVVD) are RNA binding. Residue Asp268 is the Nucleophile of the active site. Residues 273-277 (TRNAR) are RNA binding; important for wobble base 34 recognition. Cys306, Cys308, Cys311, and His337 together coordinate Zn(2+).

The protein belongs to the queuine tRNA-ribosyltransferase family. Homodimer. Within each dimer, one monomer is responsible for RNA recognition and catalysis, while the other monomer binds to the replacement base PreQ1. Zn(2+) is required as a cofactor.

The catalysed reaction is 7-aminomethyl-7-carbaguanine + guanosine(34) in tRNA = 7-aminomethyl-7-carbaguanosine(34) in tRNA + guanine. It participates in tRNA modification; tRNA-queuosine biosynthesis. In terms of biological role, catalyzes the base-exchange of a guanine (G) residue with the queuine precursor 7-aminomethyl-7-deazaguanine (PreQ1) at position 34 (anticodon wobble position) in tRNAs with GU(N) anticodons (tRNA-Asp, -Asn, -His and -Tyr). Catalysis occurs through a double-displacement mechanism. The nucleophile active site attacks the C1' of nucleotide 34 to detach the guanine base from the RNA, forming a covalent enzyme-RNA intermediate. The proton acceptor active site deprotonates the incoming PreQ1, allowing a nucleophilic attack on the C1' of the ribose to form the product. After dissociation, two additional enzymatic reactions on the tRNA convert PreQ1 to queuine (Q), resulting in the hypermodified nucleoside queuosine (7-(((4,5-cis-dihydroxy-2-cyclopenten-1-yl)amino)methyl)-7-deazaguanosine). In Leptospira biflexa serovar Patoc (strain Patoc 1 / Ames), this protein is Queuine tRNA-ribosyltransferase.